The chain runs to 238 residues: Insulin-like growth factor-binding protein 6 (238 aa).

A signal peptide spans M1–S25. Positions A26–A108 constitute an IGFBP N-terminal domain. Disulfide bonds link C30/C33, C41/C45, C58/C64, C72/C85, and C79/C105. Positions R104–P159 are disordered. 2 stretches are compositionally biased toward basic and acidic residues: residues G110 to K120 and R127 to K138. The Thyroglobulin type-1 domain maps to M157–C232. 3 disulfide bridges follow: C160–C188, C199–C210, and C212–C232. The disordered stretch occupies residues Q218–G238. Positions G226–G238 are enriched in polar residues.

Interacts (via C-terminal domain) with PHB2. O-glycosylated.

It localises to the secreted. Its function is as follows. IGF-binding proteins prolong the half-life of the IGFs and have been shown to either inhibit or stimulate the growth promoting effects of the IGFs on cell culture. They alter the interaction of IGFs with their cell surface receptors. Activates the MAPK signaling pathway and induces cell migration. The polypeptide is Insulin-like growth factor-binding protein 6 (Igfbp6) (Mus musculus (Mouse)).